The primary structure comprises 317 residues: Transaldolase A (317 aa).

The Schiff-base intermediate with substrate role is filled by Lys-132.

This sequence belongs to the transaldolase family. Type 1 subfamily. Homodimer.

The protein localises to the cytoplasm. The enzyme catalyses D-sedoheptulose 7-phosphate + D-glyceraldehyde 3-phosphate = D-erythrose 4-phosphate + beta-D-fructose 6-phosphate. The protein operates within carbohydrate degradation; pentose phosphate pathway; D-glyceraldehyde 3-phosphate and beta-D-fructose 6-phosphate from D-ribose 5-phosphate and D-xylulose 5-phosphate (non-oxidative stage): step 2/3. Its function is as follows. Transaldolase is important for the balance of metabolites in the pentose-phosphate pathway. This chain is Transaldolase A (talA), found in Pasteurella multocida (strain Pm70).